The primary structure comprises 103 residues: Pterin-4-alpha-carbinolamine dehydratase 2 (103 aa).

The protein belongs to the pterin-4-alpha-carbinolamine dehydratase family. In terms of tissue distribution, highest level found in the kidney, liver, heart and ovarian follicles.

It carries out the reaction (4aS,6R)-4a-hydroxy-L-erythro-5,6,7,8-tetrahydrobiopterin = (6R)-L-erythro-6,7-dihydrobiopterin + H2O. Functionally, involved in tetrahydrobiopterin biosynthesis. Seems to both prevent the formation of 7-pterins and accelerate the formation of quinonoid-BH2. In terms of biological role, regulates the dimerization of homeodomain protein HNF-1-alpha and enhances its transcriptional activity. The protein is Pterin-4-alpha-carbinolamine dehydratase 2 (PCBD2) of Gallus gallus (Chicken).